A 328-amino-acid polypeptide reads, in one-letter code: Zinc transporter ZIP13 (328 aa).

The Lumenal segment spans residues 1 to 7; the sequence is MPGCPCP. The chain crosses the membrane as a helical span at residues 8–28; the sequence is GCGMAGPRLLFLTALALELLG. Topologically, residues 29 to 68 are cytoplasmic; sequence RAGGSQPALRSRGTATACRLDNKESESWGALLSGERLDTW. A helical membrane pass occupies residues 69 to 89; sequence ICSLLGSLMVGLSGVFPLLVI. Over 90 to 108 the chain is Lumenal; it reads PLEMGTMLRSEAGAWHLKQ. The chain crosses the membrane as a helical span at residues 109-129; sequence LLSFALGGLLGNVFLHLLPEA. Residues 130-149 lie on the Cytoplasmic side of the membrane; sequence WAYTCSASPGGEGQSLQQQQ. The helical transmembrane segment at 150–170 threads the bilayer; sequence QLGLWVIAGILTFLALEKMFL. Residues 171 to 199 are Lumenal-facing; that stretch reads DSKEEGTSQVSGYLNLLANTIDNFTHGLA. Residues 200-220 traverse the membrane as a helical segment; sequence VAASFLVSKKIGLLTTMAILL. An XEXPHE-motif motif is present at residues 221–226; the sequence is HEIPHE. Topologically, residues 221-242 are cytoplasmic; the sequence is HEIPHEVGDFAILLRAGFDRWS. A helical membrane pass occupies residues 243 to 263; sequence AAKLQLSTALGGLLGAGFAIC. At 264–273 the chain is on the lumenal side; the sequence is TQSPKGVEET. Residues 274–294 traverse the membrane as a helical segment; it reads AAWVLPFTSGGFLYIALVNVL. The Cytoplasmic segment spans residues 295 to 306; it reads PDLLEEEDPWRS. The chain crosses the membrane as a helical span at residues 307–327; the sequence is LQQLLLLCAGIVVMVLFSLFV. Residue Asp-328 is a topological domain, lumenal.

This sequence belongs to the ZIP transporter (TC 2.A.5) family. In terms of assembly, homodimer.

The protein localises to the golgi apparatus membrane. Its subcellular location is the cytoplasmic vesicle membrane. It localises to the endoplasmic reticulum membrane. It catalyses the reaction Zn(2+)(in) = Zn(2+)(out). Functions as a zinc transporter transporting Zn(2+) from the Golgi apparatus to the cytosol and thus influences the zinc level at least in areas of the cytosol. May regulate beige adipocyte differentiation. The sequence is that of Zinc transporter ZIP13 from Pongo abelii (Sumatran orangutan).